A 250-amino-acid chain; its full sequence is Sugar fermentation stimulation protein homolog (250 aa).

Belongs to the SfsA family.

The sequence is that of Sugar fermentation stimulation protein homolog from Trichodesmium erythraeum (strain IMS101).